The primary structure comprises 1413 residues: Zinc finger protein 609 (1413 aa).

Disordered regions lie at residues 1–26, 47–196, 354–484, 517–659, and 695–765; these read MSLSSGACGGKGVDANPVETYDSGDE, QKLE…GRGS, RFCD…EPTL, AHAH…RPIA, and PNSP…AAGD. Phosphoserine occurs at positions 358, 361, and 379. A Phosphothreonine modification is found at Thr-381. Residues 386-405 are compositionally biased toward low complexity; the sequence is AAAASDSKGTSSSSKTRAGA. Phosphoserine occurs at positions 413, 433, 446, 452, 467, and 470. The segment covering 423-437 has biased composition (polar residues); the sequence is ASSTSEDVKASPSSA. Lys-479 is covalently cross-linked (Glycyl lysine isopeptide (Lys-Gly) (interchain with G-Cter in SUMO2)). Residues 495-520 form a C2H2-type zinc finger; the sequence is IDCPHPNCNKKYKHINGLKYHQAHAH. Residues 519–529 show a composition bias toward basic and acidic residues; the sequence is AHTDDDSKPEA. Phosphoserine occurs at positions 533, 575, and 577. The segment covering 625–648 has biased composition (basic and acidic residues); the sequence is SLERKCMEKEKCKKPSSLKSEKIP. Residues 725-735 are compositionally biased toward basic residues; the sequence is DKKKKDKKKKD. Ser-742 bears the Phosphoserine mark. Phosphothreonine is present on Thr-745. The span at 750 to 763 shows a compositional bias: basic and acidic residues; the sequence is CRAEEGKSPFRDAA. Residue Ser-757 is modified to Phosphoserine. Lys-788 is covalently cross-linked (Glycyl lysine isopeptide (Lys-Gly) (interchain with G-Cter in SUMO2)). A compositionally biased stretch (polar residues) spans 797–843; sequence FTDNAPSPSIGGSSRLDSTTPTQPLTPLHVVTQNGAEASSVKTNSPA. Disordered regions lie at residues 797–962, 1004–1127, 1154–1221, and 1273–1369; these read FTDN…VIQQ, YEEQ…RQAE, IKSE…SPLT, and SKVS…STHH. Phosphoserine is present on Ser-803. Phosphothreonine is present on Thr-822. Ser-841, Ser-845, and Ser-848 each carry phosphoserine. Residues 854-875 are compositionally biased toward basic and acidic residues; sequence GEGKVDSAKSKDPEQLVKEGAK. Residues 902–916 are compositionally biased toward polar residues; it reads YAQSSPGTLTSSSQA. Over residues 925-949 the composition is skewed to basic and acidic residues; it reads TKKDEEPESVEGKVKNDVCEEKKPE. Over residues 950 to 962 the composition is skewed to polar residues; that stretch reads LSNSSQQPSVIQQ. Basic and acidic residues predominate over residues 1022–1044; that stretch reads GLDKKTEMGLKEREASLKEEWKQ. Residue Ser-1057 is modified to Phosphoserine. A Glycyl lysine isopeptide (Lys-Gly) (interchain with G-Cter in SUMO2) cross-link involves residue Lys-1063. 3 stretches are compositionally biased toward basic and acidic residues: residues 1099–1115, 1154–1189, and 1197–1210; these read LKGKLGEASHLGKEASE, IKSEDDRWKEERDRKLKEDRSRSKDSVPKEDGKEST, and PSEESRLGSKEPRP. A Glycyl lysine isopeptide (Lys-Gly) (interchain with G-Cter in SUMO2) cross-link involves residue Lys-1155. Polar residues predominate over residues 1288–1298; the sequence is PSVSCKASSES. A Glycyl lysine isopeptide (Lys-Gly) (interchain with G-Cter in SUMO2) cross-link involves residue Lys-1299. Gly residues predominate over residues 1330 to 1348; it reads GCGVVGGGGSCGSVAGAGG.

Interacts (via N-terminus) with NIPBL. Interacts with the multiprotein complex Integrator. As to expression, expressed in myoblasts. Expressed in neurons in various brain regions, including striatum, prefrontal cortex, olfactory bulb, midbrain, cerebellum and hippocampus. Expressed in neural stem cells (at protein level). Expressed in thymocytes.

It localises to the nucleus. In terms of biological role, transcription factor, which activates RAG1, and possibly RAG2, transcription. Through the regulation of RAG1/2 expression, may regulate thymocyte maturation. Along with NIPBL and the multiprotein complex Integrator, promotes cortical neuron migration during brain development by regulating the transcription of crucial genes in this process. Preferentially binds promoters containing paused RNA polymerase II. Up-regulates the expression of SEMA3A, NRP1, PLXND1 and GABBR2 genes, among others. Its function is as follows. Involved in regulation of myoblast proliferation during myogenesis. This chain is Zinc finger protein 609 (Znf609), found in Mus musculus (Mouse).